Consider the following 255-residue polypeptide: Major prion protein (255 aa).

The N-terminal stretch at Met-1 to Cys-24 is a signal peptide. The tract at residues Lys-25–Tyr-41 is interaction with ADGRG6. Residues Lys-25–Ala-232 are interaction with GRB2, ERI3 and SYN1. Positions Pro-28–Thr-110 are disordered. 5 consecutive repeat copies span residues Pro-54–Gln-62, Pro-63–Gln-70, Pro-71–Gln-78, Pro-79–Gln-86, and Pro-87–Gly-94. Residues Pro-54–Gly-94 form a 5 X 8 AA tandem repeats of P-H-G-G-G-W-G-Q region. The segment covering Gln-55 to Gly-97 has biased composition (gly residues). Residues His-64, Gly-65, Gly-66, His-72, Gly-73, Gly-74, His-80, Gly-81, Gly-82, His-88, Gly-90, and Gly-91 each coordinate Cu(2+). Asn-174, Asn-184, and Asn-199 each carry an N-linked (GlcNAc...) asparagine glycan. An intrachain disulfide couples Cys-182 to Cys-216. Residue Ala-232 is the site of GPI-anchor amidated alanine attachment. Residues Ser-233–Gly-255 constitute a propeptide, removed in mature form.

Belongs to the prion family. In terms of assembly, monomer and homodimer. Has a tendency to aggregate into amyloid fibrils containing a cross-beta spine, formed by a steric zipper of superposed beta-strands. Soluble oligomers may represent an intermediate stage on the path to fibril formation. Copper binding may promote oligomerization. Interacts with GRB2, APP, ERI3/PRNPIP and SYN1. Mislocalized cytosolically exposed PrP interacts with MGRN1; this interaction alters MGRN1 subcellular location and causes lysosomal enlargement. Interacts with APP. Interacts with KIAA1191. Interacts with ADGRG6.

The protein localises to the cell membrane. The protein resides in the golgi apparatus. Its primary physiological function is unclear. May play a role in neuronal development and synaptic plasticity. May be required for neuronal myelin sheath maintenance. May promote myelin homeostasis through acting as an agonist for ADGRG6 receptor. May play a role in iron uptake and iron homeostasis. Soluble oligomers are toxic to cultured neuroblastoma cells and induce apoptosis (in vitro). Association with GPC1 (via its heparan sulfate chains) targets PRNP to lipid rafts. Also provides Cu(2+) or Zn(2+) for the ascorbate-mediated GPC1 deaminase degradation of its heparan sulfate side chains. The polypeptide is Major prion protein (PRNP) (Canis lupus familiaris (Dog)).